Consider the following 380-residue polypeptide: Cytochrome b (380 aa).

4 helical membrane-spanning segments follow: residues 34–54, 78–99, 114–134, and 179–199; these read FGSL…LLAT, WLIR…YLHI, WNTG…GYVL, and FFAL…IHLT. Heme b contacts are provided by histidine 84 and histidine 98. Heme b-binding residues include histidine 183 and histidine 197. Residue histidine 202 participates in a ubiquinone binding. Transmembrane regions (helical) follow at residues 227 to 247, 289 to 309, 321 to 341, and 348 to 368; these read LKDT…ALFS, LGGV…PLLH, FSQF…WVGS, and FIII…ILLP.

The protein belongs to the cytochrome b family. In terms of assembly, the cytochrome bc1 complex contains 11 subunits: 3 respiratory subunits (MT-CYB, CYC1 and UQCRFS1), 2 core proteins (UQCRC1 and UQCRC2) and 6 low-molecular weight proteins (UQCRH/QCR6, UQCRB/QCR7, UQCRQ/QCR8, UQCR10/QCR9, UQCR11/QCR10 and a cleavage product of UQCRFS1). This cytochrome bc1 complex then forms a dimer. Heme b is required as a cofactor.

The protein localises to the mitochondrion inner membrane. Its function is as follows. Component of the ubiquinol-cytochrome c reductase complex (complex III or cytochrome b-c1 complex) that is part of the mitochondrial respiratory chain. The b-c1 complex mediates electron transfer from ubiquinol to cytochrome c. Contributes to the generation of a proton gradient across the mitochondrial membrane that is then used for ATP synthesis. The polypeptide is Cytochrome b (MT-CYB) (Garrodia nereis (Grey-backed storm-petrel)).